A 489-amino-acid chain; its full sequence is Ribulose bisphosphate carboxylase large chain (489 aa).

Substrate contacts are provided by asparagine 128 and threonine 178. Lysine 180 acts as the Proton acceptor in catalysis. Residue lysine 182 participates in substrate binding. Mg(2+) contacts are provided by lysine 206, aspartate 208, and glutamate 209. Lysine 206 carries the N6-carboxylysine modification. Histidine 298 acts as the Proton acceptor in catalysis. Substrate is bound by residues arginine 299, histidine 331, and serine 383.

It belongs to the RuBisCO large chain family. Type I subfamily. Heterohexadecamer of 8 large chains and 8 small chains. Mg(2+) serves as cofactor.

It carries out the reaction 2 (2R)-3-phosphoglycerate + 2 H(+) = D-ribulose 1,5-bisphosphate + CO2 + H2O. The enzyme catalyses D-ribulose 1,5-bisphosphate + O2 = 2-phosphoglycolate + (2R)-3-phosphoglycerate + 2 H(+). In terms of biological role, ruBisCO catalyzes two reactions: the carboxylation of D-ribulose 1,5-bisphosphate, the primary event in carbon dioxide fixation, as well as the oxidative fragmentation of the pentose substrate. Both reactions occur simultaneously and in competition at the same active site. The sequence is that of Ribulose bisphosphate carboxylase large chain from Nitrosospira multiformis (strain ATCC 25196 / NCIMB 11849 / C 71).